Reading from the N-terminus, the 362-residue chain is GDSL esterase/lipase 6 (362 aa).

The first 23 residues, 1–23 (MSSSSSMDLLMCLLLLISPVVLA), serve as a signal peptide directing secretion. Ser38 (nucleophile) is an active-site residue. Asn50, Asn103, Asn107, Asn195, and Asn296 each carry an N-linked (GlcNAc...) asparagine glycan. Catalysis depends on residues Asp323 and His326.

Belongs to the 'GDSL' lipolytic enzyme family.

Its subcellular location is the secreted. This is GDSL esterase/lipase 6 (GLIP6) from Arabidopsis thaliana (Mouse-ear cress).